Reading from the N-terminus, the 127-residue chain is Protein chibby homolog 1 (127 aa).

The interval 1 to 25 (MPLFGSIFSPKKTPPRKSASLSNLH) is disordered. Phosphoserine occurs at positions 9 and 20. The segment at 60-112 (VADSVISGGVDRRETQRLRKRNQQLEEENNLLRLKVDILLDMLSETTAESHLK) is minimal region for the interaction with PKD2. The stretch at 68 to 110 (GVDRRETQRLRKRNQQLEEENNLLRLKVDILLDMLSETTAESH) forms a coiled coil. A leucine-zipper; mediates homodimerization region spans residues 77–98 (LRKRNQQLEEENNLLRLKVDIL).

The protein belongs to the chibby family. Homodimer. Homodimerization is essential for nuclear localization and interaction with KPNA4 but is dispensable for interaction with CTNNB1. Interacts with polycystin-2/PKD2 and GM130. Interacts with the C-terminal region of CTNNB1. Interacts (C-terminus) with TCIM (C-terminus), TCIM competes with CTNNB1 for the interaction with CBY1. Interacts with FAM92A; this interaction facilitates targeting of FAM92A to cilium basal body. Interacts with CIBAR2. Interacts with KPNA4. Found in heart, brain, lung, liver, muscle, kidney and testis. Levels are approximately 3-fold higher in embryonic and adult heart than in lung or liver.

Its subcellular location is the nucleus speckle. It localises to the cytoplasm. It is found in the cytoskeleton. The protein localises to the cilium basal body. The protein resides in the microtubule organizing center. Its subcellular location is the centrosome. It localises to the centriole. It is found in the golgi apparatus. The protein localises to the trans-Golgi network. The protein resides in the cell projection. Its subcellular location is the cilium. It localises to the flagellum. It is found in the nucleus. Its function is as follows. Inhibits the Wnt/Wingless pathway by binding to CTNNB1/beta-catenin and inhibiting beta-catenin-mediated transcriptional activation through competition with TCF/LEF transcription factors. Has also been shown to play a role in regulating the intracellular trafficking of polycystin-2/PKD2 and possibly of other intracellular proteins. Promotes adipocyte and cardiomyocyte differentiation. The polypeptide is Protein chibby homolog 1 (Cby1) (Mus musculus (Mouse)).